Here is a 259-residue protein sequence, read N- to C-terminus: Pre-mRNA-splicing factor CWC24 (259 aa).

The segment at 1 to 67 (MFRKRLVNKS…HENEGKLQKK (67 aa)) is disordered. The span at 25 to 39 (FSEEKLVASDEEKGS) shows a compositional bias: basic and acidic residues. Phosphoserine is present on S33. Residues 47-57 (KSGNSRTLQLS) are compositionally biased toward polar residues. Residues 58–67 (HENEGKLQKK) show a composition bias toward basic and acidic residues. S105 bears the Phosphoserine mark. The C3H1-type zinc finger occupies 138 to 166 (DFQPDVCKDYKQTGYCGYGDSCKFLHSRD). The RING-type zinc-finger motif lies at 199–237 (CTLCKEDYKSPVVTNCGHYFCGSCFAKDMKKGTKCFICH).

Belongs to the CWC24 family. Belongs to the CWC complex (or CEF1-associated complex), a spliceosome sub-complex reminiscent of a late-stage spliceosome composed of the U2, U5 and U6 snRNAs and at least BUD13, BUD31, BRR2, CDC40, CEF1, CLF1, CUS1, CWC2, CWC15, CWC21, CWC22, CWC23, CWC24, CWC25, CWC27, ECM2, HSH155, IST3, ISY1, LEA1, MSL1, NTC20, PRP8, PRP9, PRP11, PRP19, PRP21, PRP22, PRP45, PRP46, SLU7, SMB1, SMD1, SMD2, SMD3, SMX2, SMX3, SNT309, SNU114, SPP2, SYF1, SYF2, RSE1 and YJU2.

The protein localises to the nucleus. Its function is as follows. Involved in pre-mRNA splicing. The protein is Pre-mRNA-splicing factor CWC24 (CWC24) of Saccharomyces cerevisiae (strain ATCC 204508 / S288c) (Baker's yeast).